Reading from the N-terminus, the 291-residue chain is Phosphatidylserine decarboxylase proenzyme (291 aa).

Residues Asp93, His150, and Ser253 each act as charge relay system; for autoendoproteolytic cleavage activity in the active site. Catalysis depends on Ser253, which acts as the Schiff-base intermediate with substrate; via pyruvic acid; for decarboxylase activity. The residue at position 253 (Ser253) is a Pyruvic acid (Ser); by autocatalysis.

It belongs to the phosphatidylserine decarboxylase family. PSD-B subfamily. Prokaryotic type I sub-subfamily. Heterodimer of a large membrane-associated beta subunit and a small pyruvoyl-containing alpha subunit. It depends on pyruvate as a cofactor. Is synthesized initially as an inactive proenzyme. Formation of the active enzyme involves a self-maturation process in which the active site pyruvoyl group is generated from an internal serine residue via an autocatalytic post-translational modification. Two non-identical subunits are generated from the proenzyme in this reaction, and the pyruvate is formed at the N-terminus of the alpha chain, which is derived from the carboxyl end of the proenzyme. The autoendoproteolytic cleavage occurs by a canonical serine protease mechanism, in which the side chain hydroxyl group of the serine supplies its oxygen atom to form the C-terminus of the beta chain, while the remainder of the serine residue undergoes an oxidative deamination to produce ammonia and the pyruvoyl prosthetic group on the alpha chain. During this reaction, the Ser that is part of the protease active site of the proenzyme becomes the pyruvoyl prosthetic group, which constitutes an essential element of the active site of the mature decarboxylase.

The protein localises to the cell membrane. The catalysed reaction is a 1,2-diacyl-sn-glycero-3-phospho-L-serine + H(+) = a 1,2-diacyl-sn-glycero-3-phosphoethanolamine + CO2. Its pathway is phospholipid metabolism; phosphatidylethanolamine biosynthesis; phosphatidylethanolamine from CDP-diacylglycerol: step 2/2. Its function is as follows. Catalyzes the formation of phosphatidylethanolamine (PtdEtn) from phosphatidylserine (PtdSer). The sequence is that of Phosphatidylserine decarboxylase proenzyme from Alcanivorax borkumensis (strain ATCC 700651 / DSM 11573 / NCIMB 13689 / SK2).